Here is a 91-residue protein sequence, read N- to C-terminus: Mercuric transport protein periplasmic component (91 aa).

A signal peptide spans 1–19 (MKKLLSALALAAVVAPVWA). Positions 22-88 (QTVTLSVPGM…ATEDAGYPSS (67 aa)) constitute an HMA domain. Hg(2+)-binding residues include Cys-33 and Cys-36.

The protein belongs to the MerP family. Monomer.

It is found in the periplasm. Its function is as follows. Involved in mercury resistance. Acts as a mercury scavenger that specifically binds to a mercuric ion in the periplasm and probably passes it to the cytoplasmic mercuric reductase MerA via the mercuric transport protein MerT. The sequence is that of Mercuric transport protein periplasmic component from Pseudomonas fluorescens.